Consider the following 78-residue polypeptide: Large ribosomal subunit protein bL28 (78 aa).

It belongs to the bacterial ribosomal protein bL28 family.

This is Large ribosomal subunit protein bL28 from Proteus mirabilis (strain HI4320).